A 232-amino-acid chain; its full sequence is Ornithine carbamoyltransferase (232 aa).

Residues glutamine 15, arginine 39, and histidine 66–glutamine 69 contribute to the carbamoyl phosphate site. L-ornithine contacts are provided by residues asparagine 99, aspartate 163, and serine 167–methionine 168. Carbamoyl phosphate is bound by residues histidine 204–proline 207 and threonine 232.

Belongs to the aspartate/ornithine carbamoyltransferase superfamily. OTCase family.

The protein resides in the cytoplasm. It carries out the reaction carbamoyl phosphate + L-ornithine = L-citrulline + phosphate + H(+). It functions in the pathway amino-acid biosynthesis; L-arginine biosynthesis; L-arginine from L-ornithine and carbamoyl phosphate: step 1/3. This chain is Ornithine carbamoyltransferase (argF), found in Neisseria animalis.